The chain runs to 352 residues: UDP-N-acetylglucosamine--N-acetylmuramyl-(pentapeptide) pyrophosphoryl-undecaprenol N-acetylglucosamine transferase (352 aa).

2 residues coordinate UDP-N-acetyl-alpha-D-glucosamine: Ser-195 and Gln-287.

This sequence belongs to the glycosyltransferase 28 family. MurG subfamily.

The protein localises to the cell membrane. It catalyses the reaction Mur2Ac(oyl-L-Ala-gamma-D-Glu-L-Lys-D-Ala-D-Ala)-di-trans,octa-cis-undecaprenyl diphosphate + UDP-N-acetyl-alpha-D-glucosamine = beta-D-GlcNAc-(1-&gt;4)-Mur2Ac(oyl-L-Ala-gamma-D-Glu-L-Lys-D-Ala-D-Ala)-di-trans,octa-cis-undecaprenyl diphosphate + UDP + H(+). It participates in cell wall biogenesis; peptidoglycan biosynthesis. Its function is as follows. Cell wall formation. Catalyzes the transfer of a GlcNAc subunit on undecaprenyl-pyrophosphoryl-MurNAc-pentapeptide (lipid intermediate I) to form undecaprenyl-pyrophosphoryl-MurNAc-(pentapeptide)GlcNAc (lipid intermediate II). This Streptococcus pneumoniae serotype 19F (strain G54) protein is UDP-N-acetylglucosamine--N-acetylmuramyl-(pentapeptide) pyrophosphoryl-undecaprenol N-acetylglucosamine transferase.